The primary structure comprises 372 residues: Gibberellin 20 oxidase 1 (372 aa).

The Fe2OG dioxygenase domain occupies 209 to 309; the sequence is RNDSIMRLNY…RRSLAFFLCP (101 aa). The Fe cation site is built by H234, D236, and H290. R300 is an active-site residue.

Belongs to the iron/ascorbate-dependent oxidoreductase family. GA20OX subfamily. Requires Fe(2+) as cofactor. It depends on L-ascorbate as a cofactor. In terms of tissue distribution, preferentially expressed in reproductive organs. Expressed in the epithelium of embryos and the tapetum of anthers. Expressed at low levels in the shoot apical meristem.

The catalysed reaction is gibberellin A12 + 2 2-oxoglutarate + 3 O2 + H(+) = gibberellin A9 + 2 succinate + 3 CO2 + 2 H2O. The enzyme catalyses gibberellin A53 + 2 2-oxoglutarate + 3 O2 + H(+) = gibberellin A20 + 2 succinate + 3 CO2 + 2 H2O. Its function is as follows. Key oxidase enzyme in the biosynthesis of gibberellin. Catalyzes the conversion of GA12 and GA53 to GA9 and GA20 respectively, via a three-step oxidation at C-20 of the GA skeleton. The chain is Gibberellin 20 oxidase 1 from Oryza sativa subsp. japonica (Rice).